Reading from the N-terminus, the 422-residue chain is Anhydromevalonate phosphate decarboxylase (422 aa).

The Mn(2+) site is built by N134 and E197. The active-site Proton acceptor is the D244.

It belongs to the UbiD family. Prenylated FMN serves as cofactor. The cofactor is Mn(2+).

The catalysed reaction is (2E)-3-methyl-5-phosphooxypent-2-enoate + H(+) = isopentenyl phosphate + CO2. It participates in isoprenoid biosynthesis; isopentenyl diphosphate biosynthesis via mevalonate pathway. Catalyzes the conversion of trans-anhydromevalonate 5-phosphate (tAHMP) into isopentenyl phosphate. Involved in the archaeal mevalonate (MVA) pathway, which provides fundamental precursors for isoprenoid biosynthesis, such as isopentenyl diphosphate (IPP) and dimethylallyl diphosphate (DMAPP). This chain is Anhydromevalonate phosphate decarboxylase, found in Methanosarcina mazei (strain ATCC BAA-159 / DSM 3647 / Goe1 / Go1 / JCM 11833 / OCM 88) (Methanosarcina frisia).